Consider the following 298-residue polypeptide: 4-hydroxy-tetrahydrodipicolinate synthase (298 aa).

Threonine 48 provides a ligand contact to pyruvate. Residue tyrosine 137 is the Proton donor/acceptor of the active site. Lysine 166 (schiff-base intermediate with substrate) is an active-site residue. Isoleucine 207 provides a ligand contact to pyruvate.

Belongs to the DapA family. As to quaternary structure, homotetramer; dimer of dimers.

It localises to the cytoplasm. It carries out the reaction L-aspartate 4-semialdehyde + pyruvate = (2S,4S)-4-hydroxy-2,3,4,5-tetrahydrodipicolinate + H2O + H(+). It functions in the pathway amino-acid biosynthesis; L-lysine biosynthesis via DAP pathway; (S)-tetrahydrodipicolinate from L-aspartate: step 3/4. In terms of biological role, catalyzes the condensation of (S)-aspartate-beta-semialdehyde [(S)-ASA] and pyruvate to 4-hydroxy-tetrahydrodipicolinate (HTPA). The polypeptide is 4-hydroxy-tetrahydrodipicolinate synthase (Campylobacter jejuni subsp. jejuni serotype O:6 (strain 81116 / NCTC 11828)).